Here is a 434-residue protein sequence, read N- to C-terminus: CinA-like protein (434 aa).

The protein belongs to the CinA family.

This chain is CinA-like protein, found in Mycobacterium avium (strain 104).